The chain runs to 475 residues: MTDADSAVPPRLDEDAISKLELTEVADLIRTRQLTSAEVTESTLRRIERLDPQLKSYAFVMPETALAAARAADADIARGHYEGVLHGVPIGVKDLCYTVDAPTAAGTTIFRDFRPAYDATVVARLRAAGAVIIGKLAMTEGAYLGYHPSLPTPVNPWDPTAWAGVSSSGCGVATAAGLCFGSIGSDTGGSIRFPTSMCGVTGIKPTWGRVSRHGVVELAASYDHVGPITRSAHDAAVLLSVIAGSDIHDPSCSAEPVPDYAADLALTRIPRVGVDWSQTTSFDEDTTAMLADVVKTLDDIGWPVIDVKLPALAPMVAAFGKMRAVETAIAHADTYPARADEYGPIMRAMIDAGHRLAAVEYQTLTERRLEFTRSLRRVFHDVDILLMPSAGIASPTLETMRGLGQDPELTARLAMPTAPFNVSGNPAICLPAGTTARGTPLGVQFIGREFDEHLLVRAGHAFQQVTGYHRRRPPV.

Catalysis depends on charge relay system residues lysine 93 and serine 166. Serine 190 (acyl-ester intermediate) is an active-site residue.

This sequence belongs to the amidase family.

The catalysed reaction is a monocarboxylic acid amide + H2O = a monocarboxylate + NH4(+). In Mycobacterium bovis (strain ATCC BAA-935 / AF2122/97), this protein is Putative amidase AmiD (amiD).